The following is a 116-amino-acid chain: Large ribosomal subunit protein bL17 (116 aa).

This sequence belongs to the bacterial ribosomal protein bL17 family. In terms of assembly, part of the 50S ribosomal subunit. Contacts protein L32.

This chain is Large ribosomal subunit protein bL17, found in Prochlorococcus marinus (strain MIT 9515).